A 207-amino-acid polypeptide reads, in one-letter code: MYVMKQNGWVELICGSMFSGKSEELIRRVRRATYAHINVRVYKPAIDDRYDDKAIVSHDGTSTMARPIHDAVEILEDVDNNVEIVGIDEVQFFDNNVVDVIEELADRGIRVIVAGLDLDFRGEPFEPVPKIMALAESVTKLNAICPICGSPASRTQRLIDGKPASYNDPIILVGASESYEPRCRHHHEVPFRPENNFATKSWDALKS.

Residues glycine 15–serine 22 and aspartate 88–glutamine 91 contribute to the ATP site. Glutamate 89 (proton acceptor) is an active-site residue. Cysteine 145, cysteine 148, cysteine 183, and histidine 186 together coordinate Zn(2+).

Belongs to the thymidine kinase family. Homotetramer.

Its subcellular location is the cytoplasm. The catalysed reaction is thymidine + ATP = dTMP + ADP + H(+). In Oceanobacillus iheyensis (strain DSM 14371 / CIP 107618 / JCM 11309 / KCTC 3954 / HTE831), this protein is Thymidine kinase.